The sequence spans 266 residues: U2 small nuclear ribonucleoprotein A' (266 aa).

LRR repeat units follow at residues isoleucine 30–alanine 51, proline 53–aspartate 74, aspartate 75–proline 95, and lysine 97–serine 118. The LRRCT domain maps to asparagine 132–aspartate 170.

The protein belongs to the U2 small nuclear ribonucleoprotein A family. Associated with the spliceosome.

The protein resides in the nucleus. Its function is as follows. Involved in pre-mRNA splicing. The polypeptide is U2 small nuclear ribonucleoprotein A' (LEA1) (Candida glabrata (strain ATCC 2001 / BCRC 20586 / JCM 3761 / NBRC 0622 / NRRL Y-65 / CBS 138) (Yeast)).